Reading from the N-terminus, the 243-residue chain is Ice-binding protein K1-A (243 aa).

The first 20 residues, Met-1–Ala-20, serve as a signal peptide directing secretion.

Belongs to the ice-binding protein family.

It localises to the secreted. Functionally, binds to the surface of ice crystals. Inhibits growth of the ice crystals. Has antifreeze activity for survival under snow cover. Has high thermal hysteresis (TH) activity, which is the ability to lower the freezing point of an aqueous solution below its melting point, and thus the freezing of the cell fluid can be prevented protecting the organism from ice damage. The TH activity of this protein is 2.0 degrees Celsius at 0.11 mM. The polypeptide is Ice-binding protein K1-A (Typhula ishikariensis (Gray snow mold fungus)).